Here is a 20-residue protein sequence, read N- to C-terminus: Ranalexin-1Ca (20 aa).

Cysteine 14 and cysteine 20 are disulfide-bonded.

As to expression, expressed by the skin glands.

It is found in the secreted. Functionally, antibacterial activity against Gram-positive bacterium S.aureus (MIC=17 uM) and Gram-negative bacterium E.coli (MIC=4 uM). Has activity against C.albicans (MIC=14 uM). The polypeptide is Ranalexin-1Ca (Lithobates clamitans (Green frog)).